A 321-amino-acid polypeptide reads, in one-letter code: Glycerol-3-phosphate phosphatase (321 aa).

The active-site Nucleophile is the D34. Residues D34, D36, and D260 each coordinate Mg(2+). The Proton donor role is filled by D36.

The protein belongs to the HAD-like hydrolase superfamily. CbbY/CbbZ/Gph/YieH family. In terms of assembly, homodimer. The cofactor is Mg(2+). In terms of tissue distribution, expression was confirmed in liver, adipose tissue, testis and pancreatic islet.

It carries out the reaction O-phospho-L-tyrosyl-[protein] + H2O = L-tyrosyl-[protein] + phosphate. The enzyme catalyses sn-glycerol 1-phosphate + H2O = glycerol + phosphate. It catalyses the reaction sn-glycerol 3-phosphate + H2O = glycerol + phosphate. In terms of biological role, glycerol-3-phosphate phosphatase hydrolyzing glycerol-3-phosphate into glycerol. Thereby, regulates the cellular levels of glycerol-3-phosphate a metabolic intermediate of glucose, lipid and energy metabolism. Was also shown to have a 2-phosphoglycolate phosphatase activity and a tyrosine-protein phosphatase activity. However, their physiological relevance is unclear. In vitro, also has a phosphatase activity toward ADP, ATP, GDP and GTP. The polypeptide is Glycerol-3-phosphate phosphatase (Rattus norvegicus (Rat)).